A 307-amino-acid polypeptide reads, in one-letter code: NAD(+) hydrolase TcpC (307 aa).

A helical transmembrane segment spans residues 22 to 42 (YNILFFIFLSIAIPFLLFLAW). Positions 169–303 (THYDFFISHA…EIARELAEIA (135 aa)) constitute a TIR domain. NAD(+) is bound by residues 178 to 179 (AK) and Glu-208. Glu-244 is an active-site residue.

In terms of assembly, interacts with host MYD88. Interacts with host TLR4.

It localises to the secreted. Its subcellular location is the membrane. The catalysed reaction is NAD(+) + H2O = ADP-D-ribose + nicotinamide + H(+). It catalyses the reaction NADP(+) + H2O = ADP-D-ribose 2'-phosphate + nicotinamide + H(+). Functionally, virulence factor that suppresses host Toll-like receptor (TLR)-mediated cytokine production upon infection, thereby increasing bacterial burden in the urinary tract and promoting renal tissue damage. Acts as a NAD(+) hydrolase (NADase) by catalyzing cleavage of NAD(+) into ADP-D-ribose (ADPR) and nicotinamide. Also able to hydrolyze NADP(+), but not other NAD(+)-related molecules. In Escherichia coli O6:H1 (strain CFT073 / ATCC 700928 / UPEC), this protein is NAD(+) hydrolase TcpC.